The chain runs to 474 residues: MTVKTRFAPSPTGYLHVGGARTALYSWLFAKNKGGEFVLRIEDTDLERNSQEAVDAILEGMKWMGMEWDEGPYYQSKRFDRYNEVVDLLLSEDKAYKCYASKELLDEIRTEQEENKEMARYDANHPKIVAANAAAKEGDASVIRFRNPKEGSVVFDDQIRGRIEISNSQLDDLIIRRTDGAPTYNFVVVVDDWDMGITQVIRGEDHINNTPRQINIYEALGAPVPMFAHCAMILGDDGAKLSKRHGAVSVMQYRDEGYLPNALNNYLVRLGWSHGDQEIFSQEEMINLFSLDAVSKSASAFNTDKLRWLNNHYIKTSEPEYVANYLQWHLDQKEISLDNGPAITDVITLVSERCNTLIELADQSRYFYEDFEAFDAGAAKKHLRGVAKGPLELALAKIEALQEWTTENLHNVIEEVCAELEIGMGKIGMPLRVAVTGGGQSPSVDAVMQLIGKERVVTRIKMALAFIAEREANA.

Residues 9 to 19 carry the 'HIGH' region motif; the sequence is PSPTGYLHVGG. Residues 240 to 244 carry the 'KMSKS' region motif; it reads KLSKR. Lys-243 contacts ATP.

This sequence belongs to the class-I aminoacyl-tRNA synthetase family. Glutamate--tRNA ligase type 1 subfamily. Monomer.

It is found in the cytoplasm. It carries out the reaction tRNA(Glu) + L-glutamate + ATP = L-glutamyl-tRNA(Glu) + AMP + diphosphate. Its function is as follows. Catalyzes the attachment of glutamate to tRNA(Glu) in a two-step reaction: glutamate is first activated by ATP to form Glu-AMP and then transferred to the acceptor end of tRNA(Glu). This is Glutamate--tRNA ligase from Aliivibrio salmonicida (strain LFI1238) (Vibrio salmonicida (strain LFI1238)).